Consider the following 263-residue polypeptide: Putative hydro-lyase Psyc_1103 (263 aa).

This sequence belongs to the D-glutamate cyclase family.

This is Putative hydro-lyase Psyc_1103 from Psychrobacter arcticus (strain DSM 17307 / VKM B-2377 / 273-4).